The chain runs to 369 residues: Homoserine O-succinyltransferase (369 aa).

The 280-residue stretch at Asn49–Met328 folds into the AB hydrolase-1 domain. The active-site Nucleophile is Ser154. Arg224 provides a ligand contact to substrate. Catalysis depends on residues Asp317 and His350. Asp351 provides a ligand contact to substrate.

The protein belongs to the AB hydrolase superfamily. MetX family. As to quaternary structure, homodimer.

It is found in the cytoplasm. It catalyses the reaction L-homoserine + succinyl-CoA = O-succinyl-L-homoserine + CoA. Its pathway is amino-acid biosynthesis; L-methionine biosynthesis via de novo pathway; O-succinyl-L-homoserine from L-homoserine: step 1/1. In terms of biological role, transfers a succinyl group from succinyl-CoA to L-homoserine, forming succinyl-L-homoserine. This Nocardioides sp. (strain ATCC BAA-499 / JS614) protein is Homoserine O-succinyltransferase.